The primary structure comprises 378 residues: MIINNVKLVLENEVVSGSLEVQNGEIRAFAESQSRLPEAMDGEGGWLLPGLIELHTDNLDKFFTPRPKVDWPAHSAMSSHDALMVASGITTVLDAVAIGDVRDGGDRLENLEKMINAIEETQKRGVNRAEHRLHLRCELPHHTTLPLFEKLVQREPVTLVSLMDHSPGQRQFANREKYREYYQGKYSLTDAQMQQYEEEQLALAARWSQPNRESIAALCRARKIALASHDDATHAHVAESHQLGSVIAEFPTTFEAAEASRKHGMNVLMGAPNIVRGGSHSGNVAASELAQLGLLDILSSDYYPASLLDAAFRVADDQSNRFTLPQAVKLVTKNPAQALNLQDRGVIGEGKRADLVLAHRKDNHIHIDHVWRQGKRVF.

The protein belongs to the metallo-dependent hydrolases superfamily.

It carries out the reaction alpha-D-ribose 1-methylphosphonate 5-triphosphate + H2O = alpha-D-ribose 1-methylphosphonate 5-phosphate + diphosphate + H(+). In terms of biological role, catalyzes the hydrolysis of alpha-D-ribose 1-methylphosphonate triphosphate (RPnTP) to form alpha-D-ribose 1-methylphosphonate phosphate (PRPn) and diphosphate. This chain is Alpha-D-ribose 1-methylphosphonate 5-triphosphate diphosphatase (phnM), found in Escherichia coli (strain K12).